We begin with the raw amino-acid sequence, 88 residues long: UPF0297 protein BcerKBAB4_4234 (88 aa).

The protein belongs to the UPF0297 family.

This Bacillus mycoides (strain KBAB4) (Bacillus weihenstephanensis) protein is UPF0297 protein BcerKBAB4_4234.